A 43-amino-acid chain; its full sequence is Bacteriocin weissellin-A (43 aa).

A disulfide bond links Cys9 and Cys14.

It localises to the secreted. Functionally, highly active against Gram-positive bacteria M.flavus strain ATCC 400, M.luteus strain CECT241, C.soprogenes strain NCTC533, L.monocytogenes strain ATCC 19111, L.inocua strain ATCC BAA-680D and S.carnosus strain LMG13564. Less active against B.cereus strain LMG13569, C.thiaminolyticum strain ATCC 15579, E.faecalis strain NCTC8176, L.lactis strain LM0230, L.casei strain ATCC 344, L.lactis strain IL1403, L.jensenii strain ATCC 25258, L.plantarum strain CECT220, L.brevis strain ATCC 8287, L.bulgaricus strain LMG13551, P.acidilactici strain ATCC 25740, P.pentosaceus strain ATCC 33316 and P.pentosaceus strain LMG13560. Weakly active against L.mesenteroides strain ATCC 19254, L.lactis strain ATCC 1454, L.sakei strain CECT906T, L.lactis subsp. cremoris strain MC1363 and L.curvatus strain ATCC 51436. Not active against Gram-negative bacterium S.enteritidis strain ATCC 13076. The mode of action appears to be non-lytic. Inactivated by proteinase K, but insensitive to trypsin, alpha-chymotrypsin, pepsin and papain. This is Bacteriocin weissellin-A from Weissella paramesenteroides (Leuconostoc paramesenteroides).